The following is a 276-amino-acid chain: Octopine-binding periplasmic protein (276 aa).

Residues 1-20 (MKLKTILCAALLLVAGQAAA) form the signal peptide. Residues Cys57 and Cys64 are joined by a disulfide bond.

The protein belongs to the bacterial solute-binding protein 3 family.

The protein resides in the periplasm. Functionally, component of the octopine active transport system probably consisting of four subunits: Q, M, P and T. This is Octopine-binding periplasmic protein (occT) from Agrobacterium tumefaciens (strain Ach5).